The chain runs to 174 residues: uncharacterized protein (174 aa).

A helical transmembrane segment spans residues 7–27; that stretch reads LIILAIFTLWVGGFGYYLYLI.

Its subcellular location is the membrane. This is an uncharacterized protein from Rickettsia prowazekii (strain Madrid E).